A 949-amino-acid chain; its full sequence is Glutamate receptor ionotropic, kainate 1 (949 aa).

The signal sequence occupies residues 1 to 30 (MERSTVLIQPGLWTRDTSWTLLYFLCYILP). The Extracellular segment spans residues 31–576 (QTSPQVLRIG…VFSFLNPLSP (546 aa)). Residues asparagine 68, asparagine 74, asparagine 276, asparagine 379, asparagine 428, asparagine 439, and asparagine 446 are each glycosylated (N-linked (GlcNAc...) asparagine). Proline 531, threonine 533, and arginine 538 together coordinate L-glutamate. Asparagine 561 carries an N-linked (GlcNAc...) asparagine glycan. The helical transmembrane segment at 577–597 (DIWMYVLLACLGVSCVLFVIA) threads the bilayer. The Cytoplasmic segment spans residues 598–653 (RFTPYEWYNPHPCNPDSDVVENNFTLLNSFWFGVGALMQQGSELMPKALSTRIVGG). Residues 654-674 (IWWFFTLIIISSYTANLAAFL) traverse the membrane as a helical segment. The Extracellular portion of the chain corresponds to 675-834 (TVERMESPID…KEASALGVEN (160 aa)). Residues serine 704 and threonine 705 each coordinate L-glutamate. Serine 725 is subject to Phosphoserine; by PKC. Residue glutamate 753 participates in L-glutamate binding. Phosphothreonine; by PKC is present on threonine 761. A disulfide bond links cysteine 765 and cysteine 819. The N-linked (GlcNAc...) asparagine glycan is linked to asparagine 766. Residues 835-855 (IGGIFIVLAAGLVLSVFVAIG) form a helical membrane-spanning segment. Over 856–949 (EFLYKSRKNN…RRTQRKETVA (94 aa)) the chain is Cytoplasmic.

This sequence belongs to the glutamate-gated ion channel (TC 1.A.10.1) family. GRIK1 subfamily. As to quaternary structure, homotetramer or heterotetramer of pore-forming glutamate receptor subunits. Tetramers may be formed by the dimerization of dimers. Can form functional heteromeric receptors with GRIK4 and GRIK5. Interacts with KLHL17. In terms of tissue distribution, expressed in the olfactory bulb (at protein level). Expressed in subsets of neurons throughout the developing and adult central and peripheral nervous systems. In the CNS principally in the medial amygdaloid nuclei, medial habenulae, pyriform and cingulate cortices, and Purkinje cell layer. Also highly expressed in embryonic and adult dorsal root ganglia. Expressed at high levels in the trigeminal ganglion neurons.

It localises to the cell membrane. It is found in the postsynaptic cell membrane. It catalyses the reaction Ca(2+)(in) = Ca(2+)(out). In terms of biological role, ionotropic glutamate receptor that functions as a cation-permeable ligand-gated ion channel, gated by L-glutamate and the glutamatergic agonist kainic acid. L-glutamate acts as an excitatory neurotransmitter at many synapses in the central nervous system. Binding of the excitatory neurotransmitter L-glutamate induces a conformation change, leading to the opening of the cation channel, and thereby converts the chemical signal to an electrical impulse. The receptor then desensitizes rapidly and enters a transient inactive state, characterized by the presence of bound agonist. The sequence is that of Glutamate receptor ionotropic, kainate 1 (Grik1) from Rattus norvegicus (Rat).